Reading from the N-terminus, the 173-residue chain is Translation initiation factor IF-3 (173 aa).

This sequence belongs to the IF-3 family. As to quaternary structure, monomer.

The protein resides in the cytoplasm. In terms of biological role, IF-3 binds to the 30S ribosomal subunit and shifts the equilibrium between 70S ribosomes and their 50S and 30S subunits in favor of the free subunits, thus enhancing the availability of 30S subunits on which protein synthesis initiation begins. This is Translation initiation factor IF-3 from Methylorubrum populi (strain ATCC BAA-705 / NCIMB 13946 / BJ001) (Methylobacterium populi).